The chain runs to 104 residues: Protein translation factor SUI1 homolog (104 aa).

It belongs to the SUI1 family.

The sequence is that of Protein translation factor SUI1 homolog from Ignicoccus hospitalis (strain KIN4/I / DSM 18386 / JCM 14125).